The following is a 66-amino-acid chain: Large ribosomal subunit protein bL31 (66 aa).

Zn(2+)-binding residues include Cys16, Cys18, Cys36, and Cys39.

The protein belongs to the bacterial ribosomal protein bL31 family. Type A subfamily. In terms of assembly, part of the 50S ribosomal subunit. Zn(2+) serves as cofactor.

In terms of biological role, binds the 23S rRNA. The polypeptide is Large ribosomal subunit protein bL31 (Geobacter metallireducens (strain ATCC 53774 / DSM 7210 / GS-15)).